Consider the following 77-residue polypeptide: Mitochondrial import inner membrane translocase subunit TIM8 (77 aa).

Met-1 carries the post-translational modification N-acetylmethionine. Positions 35–59 (CWDKCITSAPGSKFSSSESSCLTHC) match the Twin CX3C motif motif. 2 cysteine pairs are disulfide-bonded: Cys-35-Cys-59 and Cys-39-Cys-55.

The protein belongs to the small Tim family. As to quaternary structure, heterohexamer; composed of 3 copies of TIM8 and 3 copies of TIM13, named soluble 70 kDa complex. Associates with the TIM22 complex, whose core is composed of TIM22. In terms of tissue distribution, expressed in roots, flowers, young cotyledons and leaves.

The protein resides in the mitochondrion intermembrane space. Its function is as follows. Mitochondrial intermembrane chaperone that participates in the import and insertion of some multi-pass transmembrane proteins into the mitochondrial inner membrane. Also required for the transfer of beta-barrel precursors from the TOM complex to the sorting and assembly machinery (SAM complex) of the outer membrane. Acts as a chaperone-like protein that protects the hydrophobic precursors from aggregation and guide them through the mitochondrial intermembrane space. The TIM8-TIM13 complex mediates the import of some proteins while the predominant TIM9-TIM10 70 kDa complex mediates the import of much more proteins. This is Mitochondrial import inner membrane translocase subunit TIM8 (TIM8) from Arabidopsis thaliana (Mouse-ear cress).